A 442-amino-acid chain; its full sequence is 3-oxoacyl-[acyl-carrier-protein] synthase homolog (442 aa).

The 437-residue stretch at 2–438 folds into the Ketosynthase family 3 (KS3) domain; it reads SRRVVITGLG…GVNTSLLFKK (437 aa). Residues cysteine 187, histidine 322, and histidine 362 each act as for beta-ketoacyl synthase activity in the active site.

Belongs to the thiolase-like superfamily. Beta-ketoacyl-ACP synthases family.

It is found in the mitochondrion. The enzyme catalyses a fatty acyl-[ACP] + malonyl-[ACP] + H(+) = a 3-oxoacyl-[ACP] + holo-[ACP] + CO2. Possibly involved in the synthesis of a specialized molecule, probably related to a fatty acid, which is essential for mitochondrial respiration. Is essential for oxygen uptake and the presence of cytochromes A and B. The polypeptide is 3-oxoacyl-[acyl-carrier-protein] synthase homolog (CEM1) (Saccharomyces cerevisiae (strain ATCC 204508 / S288c) (Baker's yeast)).